Reading from the N-terminus, the 235-residue chain is Enolase-phosphatase E1 (235 aa).

This sequence belongs to the HAD-like hydrolase superfamily. MasA/MtnC family. In terms of assembly, monomer. Mg(2+) serves as cofactor.

The catalysed reaction is 5-methylsulfanyl-2,3-dioxopentyl phosphate + H2O = 1,2-dihydroxy-5-(methylsulfanyl)pent-1-en-3-one + phosphate. It participates in amino-acid biosynthesis; L-methionine biosynthesis via salvage pathway; L-methionine from S-methyl-5-thio-alpha-D-ribose 1-phosphate: step 3/6. The protein operates within amino-acid biosynthesis; L-methionine biosynthesis via salvage pathway; L-methionine from S-methyl-5-thio-alpha-D-ribose 1-phosphate: step 4/6. Its function is as follows. Bifunctional enzyme that catalyzes the enolization of 2,3-diketo-5-methylthiopentyl-1-phosphate (DK-MTP-1-P) into the intermediate 2-hydroxy-3-keto-5-methylthiopentenyl-1-phosphate (HK-MTPenyl-1-P), which is then dephosphorylated to form the acireductone 1,2-dihydroxy-3-keto-5-methylthiopentene (DHK-MTPene). This Gluconacetobacter diazotrophicus (strain ATCC 49037 / DSM 5601 / CCUG 37298 / CIP 103539 / LMG 7603 / PAl5) protein is Enolase-phosphatase E1.